Consider the following 144-residue polypeptide: Protein cornichon (144 aa).

The Lumenal segment spans residues M1–Y10. Residues M1–L57 form an interaction with grk region. Residues I11 to F31 form a helical membrane-spanning segment. Residues D32–Y56 lie on the Cytoplasmic side of the membrane. Residues L57–L77 traverse the membrane as a helical segment. The Lumenal segment spans residues N78–K122. A helical membrane pass occupies residues L123–S143. T144 is a topological domain (cytoplasmic).

This sequence belongs to the cornichon family. In terms of assembly, interacts with grk.

It localises to the endoplasmic reticulum membrane. Its function is as follows. Acts as a cargo receptor necessary for the transportation of gurken (grk) to a transitional endoplasmic reticulum (tER) site and promotes its incorporation into coat protein complex II (COPII) vesicles. Associated with gurken, produces a signal received by torpedo resulting in a signaling pathway that first establishes posterior follicle cell fates and normal localization of the anterior and posterior determinants, later they act in a signaling event inducing dorsal follicle cell fates and regulating the dorsal-ventral pattern of egg and embryo. This chain is Protein cornichon (cni), found in Drosophila virilis (Fruit fly).